A 360-amino-acid chain; its full sequence is Putative F-box protein At5g55150 (360 aa).

One can recognise an F-box domain in the interval 6–54 (SSWSEFLPELLNTVFHNLNDARDILNCATVCSSWKDSSSAVYYSRTFSP).

The polypeptide is Putative F-box protein At5g55150 (Arabidopsis thaliana (Mouse-ear cress)).